Reading from the N-terminus, the 257-residue chain is Imidazole glycerol phosphate synthase subunit HisF (257 aa).

Catalysis depends on residues Asp-12 and Asp-131.

The protein belongs to the HisA/HisF family. In terms of assembly, heterodimer of HisH and HisF.

The protein localises to the cytoplasm. It carries out the reaction 5-[(5-phospho-1-deoxy-D-ribulos-1-ylimino)methylamino]-1-(5-phospho-beta-D-ribosyl)imidazole-4-carboxamide + L-glutamine = D-erythro-1-(imidazol-4-yl)glycerol 3-phosphate + 5-amino-1-(5-phospho-beta-D-ribosyl)imidazole-4-carboxamide + L-glutamate + H(+). Its pathway is amino-acid biosynthesis; L-histidine biosynthesis; L-histidine from 5-phospho-alpha-D-ribose 1-diphosphate: step 5/9. In terms of biological role, IGPS catalyzes the conversion of PRFAR and glutamine to IGP, AICAR and glutamate. The HisF subunit catalyzes the cyclization activity that produces IGP and AICAR from PRFAR using the ammonia provided by the HisH subunit. The chain is Imidazole glycerol phosphate synthase subunit HisF from Burkholderia vietnamiensis (strain G4 / LMG 22486) (Burkholderia cepacia (strain R1808)).